The primary structure comprises 452 residues: MSKTRHLFGTDGIRGLANQDPMTVEIAQKLGQAAGLRFTRGVHRHRVLLGKDTRLSGYMIECALVSGFLSAGMDVTLVGPMPTPAIAMLTRSLRADLGVMISASHNPFGDNGIKLFGPDGFKLSDETEAEIEELMRSDLAGRLAAPDRIGRASRLNDAAGRYIENAKASFPRGRRLDGLRIVIDCANGAAYRVAPTALWELGAEVIRIGCEPDGININEQCGSTKPESLCEAVVAHGAHIGIALDGDADRVLIADEKGRLIDGDQILALIARSWGRQGRLNSAQIVATVMSNMGLARCLEGLGLELVRTAVGDRYVVERMRELGANLGGEQSGHMVLSDFATTGDGLVAALQVLAVLVEEGRPASEVCRMFTPFPQMLRNVRFTGKSPLHAPSVQDARRRAEAELGTAGRLLLRESGTEPLVRVMAEAEDPALVERIVAEMCEAIDSAQVVA.

The active-site Phosphoserine intermediate is the Ser104. Positions 104, 245, 247, and 249 each coordinate Mg(2+). Ser104 is subject to Phosphoserine.

Belongs to the phosphohexose mutase family. Mg(2+) is required as a cofactor. In terms of processing, activated by phosphorylation.

It catalyses the reaction alpha-D-glucosamine 1-phosphate = D-glucosamine 6-phosphate. Catalyzes the conversion of glucosamine-6-phosphate to glucosamine-1-phosphate. The chain is Phosphoglucosamine mutase from Gluconacetobacter diazotrophicus (strain ATCC 49037 / DSM 5601 / CCUG 37298 / CIP 103539 / LMG 7603 / PAl5).